The chain runs to 2346 residues: Acetyl-CoA carboxylase 1 (2346 aa).

Methionine 1 is subject to N-acetylmethionine. 8 positions are modified to phosphoserine: serine 5, serine 23, serine 25, serine 29, serine 34, serine 48, serine 50, and serine 53. Threonine 58 bears the Phosphothreonine mark. Serine 78 bears the Phosphoserine mark. At serine 80 the chain carries Phosphoserine; by AMPK. One can recognise a Biotin carboxylation domain in the interval 117–618; sequence VIEKVLIANN…GTGWLDRLIA (502 aa). In terms of domain architecture, ATP-grasp spans 275–466; it reads SKRILNVPQE…LPAAQLQIAM (192 aa). 315–320 serves as a coordination point for ATP; that stretch reads GGGGKG. Mg(2+) is bound by residues glutamate 424, glutamate 437, and asparagine 439. Mn(2+)-binding residues include glutamate 424, glutamate 437, and asparagine 439. The active site involves arginine 441. At threonine 610 the chain carries Phosphothreonine. The 75-residue stretch at 745–819 folds into the Biotinyl-binding domain; sequence FEKENDPSVL…DPGCVIAKMQ (75 aa). At lysine 786 the chain carries N6-biotinyllysine. A phosphoserine mark is found at serine 835, serine 1201, serine 1216, and serine 1218. Threonine 1227 bears the Phosphothreonine mark. Phosphoserine occurs at positions 1259, 1263, and 1273. Lysine 1334 is modified (N6-acetyllysine). Residues 1576 to 1914 form the CoA carboxyltransferase N-terminal domain; that stretch reads PYVTKDQLQS…SVYSSVPLLN (339 aa). Residues 1576-2234 are carboxyltransferase; sequence PYVTKDQLQS…EDLVKKKIHN (659 aa). CoA contacts are provided by arginine 1823, lysine 2127, and arginine 2129. Positions 1918–2234 constitute a CoA carboxyltransferase C-terminal domain; the sequence is PIDRVIEFVP…EDLVKKKIHN (317 aa). A Phosphothreonine modification is found at threonine 2153.

Monomer, homodimer, and homotetramer. Can form filamentous polymers. Interacts in its inactive phosphorylated form with the BRCT domains of BRCA1 which prevents ACACA dephosphorylation and inhibits lipid synthesis. Interacts with MID1IP1; interaction with MID1IP1 promotes oligomerization and increases its activity. Mg(2+) serves as cofactor. Mn(2+) is required as a cofactor. The cofactor is biotin. Phosphorylation on Ser-1263 is required for interaction with BRCA1. Post-translationally, phosphorylation at Ser-80 by AMPK inactivates enzyme activity. In terms of processing, the biotin cofactor is covalently attached to the central biotinyl-binding domain and is required for the catalytic activity.

It is found in the cytoplasm. Its subcellular location is the cytosol. The catalysed reaction is hydrogencarbonate + acetyl-CoA + ATP = malonyl-CoA + ADP + phosphate + H(+). It functions in the pathway lipid metabolism; malonyl-CoA biosynthesis; malonyl-CoA from acetyl-CoA: step 1/1. Its activity is regulated as follows. Inhibited by phosphorylation. Citrate promotes oligomerization of the protein into filaments that correspond to the most active form of the carboxylase. Cytosolic enzyme that catalyzes the carboxylation of acetyl-CoA to malonyl-CoA, the first and rate-limiting step of de novo fatty acid biosynthesis. This is a 2 steps reaction starting with the ATP-dependent carboxylation of the biotin carried by the biotin carboxyl carrier (BCC) domain followed by the transfer of the carboxyl group from carboxylated biotin to acetyl-CoA. The sequence is that of Acetyl-CoA carboxylase 1 from Bos taurus (Bovine).